A 463-amino-acid chain; its full sequence is ATP synthase subunit beta (463 aa).

151–158 (GGAGVGKT) provides a ligand contact to ATP.

The protein belongs to the ATPase alpha/beta chains family. F-type ATPases have 2 components, CF(1) - the catalytic core - and CF(0) - the membrane proton channel. CF(1) has five subunits: alpha(3), beta(3), gamma(1), delta(1), epsilon(1). CF(0) has three main subunits: a(1), b(2) and c(9-12). The alpha and beta chains form an alternating ring which encloses part of the gamma chain. CF(1) is attached to CF(0) by a central stalk formed by the gamma and epsilon chains, while a peripheral stalk is formed by the delta and b chains.

The protein localises to the cell membrane. It carries out the reaction ATP + H2O + 4 H(+)(in) = ADP + phosphate + 5 H(+)(out). Its function is as follows. Produces ATP from ADP in the presence of a proton gradient across the membrane. The catalytic sites are hosted primarily by the beta subunits. The sequence is that of ATP synthase subunit beta from Clostridium botulinum (strain Okra / Type B1).